Here is a 191-residue protein sequence, read N- to C-terminus: Large ribosomal subunit protein uL5 (191 aa).

It belongs to the universal ribosomal protein uL5 family. In terms of assembly, part of the 50S ribosomal subunit; part of the 5S rRNA/L5/L18/L25 subcomplex. Contacts the 5S rRNA and the P site tRNA. Forms a bridge to the 30S subunit in the 70S ribosome.

Its function is as follows. This is one of the proteins that bind and probably mediate the attachment of the 5S RNA into the large ribosomal subunit, where it forms part of the central protuberance. In the 70S ribosome it contacts protein S13 of the 30S subunit (bridge B1b), connecting the 2 subunits; this bridge is implicated in subunit movement. Contacts the P site tRNA; the 5S rRNA and some of its associated proteins might help stabilize positioning of ribosome-bound tRNAs. The sequence is that of Large ribosomal subunit protein uL5 from Thermobifida fusca (strain YX).